Reading from the N-terminus, the 437-residue chain is MASPSSFTYYCPPSSSPVWSEPLYSLRPEHARERLQDDSVETVTSIEQAKVEEKIQEVFSSYKFNHLVPRLVLQREKHFHYLKRGLRQLTDAYECLDASRPWLCYWILHSLELLDEPIPQIVATDVCQFLELCQSPEGGFGGGPGQYPHLAPTYAAVNALCIIGTEEAYDIINREKLLQYLYSLKQPDGSFLMHVGGEVDVRSAYCAASVASLTNIITPDLFEGTAEWIARCQNWEGGIGGVPGMEAHGGYTFCGLAALVILKRERSLNLKSLLQWVTSRQMRFEGGFQGRCNKLVDGCYSFWQAGLLPLLHRALHAQGDPALSMSHWMFHQQALQEYILMCCQCPAGGLLDKPGKSRDFYHTCYCLSGLSIAQHFGSGAMLHDVVLGVPENALQPTHPVYNIGPDKVIQATTYFLQKPVPGFEELKDETSAEPATD.

PFTB repeat units follow at residues 123 to 164 (ATDV…CIIG), 174 to 215 (REKL…SLTN), 222 to 263 (FEGT…VILK), 270 to 312 (LKSL…PLLH), and 332 to 374 (QQAL…SIAQ). (2E,6E)-farnesyl diphosphate is bound by residues 248-251 (HGGY) and 291-294 (RCNK). Residues D297 and C299 each contribute to the Zn(2+) site. 300–303 (YSFW) serves as a coordination point for (2E,6E)-farnesyl diphosphate. Position 362 (H362) interacts with Zn(2+). The residue at position 436 (T436) is a Phosphothreonine.

This sequence belongs to the protein prenyltransferase subunit beta family. In terms of assembly, heterodimer of FNTA and FNTB. Zn(2+) serves as cofactor.

The enzyme catalyses L-cysteinyl-[protein] + (2E,6E)-farnesyl diphosphate = S-(2E,6E)-farnesyl-L-cysteinyl-[protein] + diphosphate. Its function is as follows. Essential subunit of the farnesyltransferase complex. Catalyzes the transfer of a farnesyl moiety from farnesyl diphosphate to a cysteine at the fourth position from the C-terminus of several proteins having the C-terminal sequence Cys-aliphatic-aliphatic-X. The sequence is that of Protein farnesyltransferase subunit beta (FNTB) from Homo sapiens (Human).